Consider the following 75-residue polypeptide: Metallothionein-like protein 1 (75 aa).

It belongs to the metallothionein superfamily. Type 15 family.

In terms of biological role, metallothioneins have a high content of cysteine residues that bind various heavy metals. This Trifolium repens (Creeping white clover) protein is Metallothionein-like protein 1 (MT1B).